A 455-amino-acid polypeptide reads, in one-letter code: tRNA-2-methylthio-N(6)-dimethylallyladenosine synthase (455 aa).

One can recognise an MTTase N-terminal domain in the interval 3–117 (KGLYIESYGC…LPELIMKATR (115 aa)). Positions 12, 48, 80, 155, 159, and 162 each coordinate [4Fe-4S] cluster. Positions 141 to 375 (VSRGVSAFVS…LLTQQRLFTK (235 aa)) constitute a Radical SAM core domain.

Belongs to the methylthiotransferase family. MiaB subfamily. In terms of assembly, monomer. [4Fe-4S] cluster is required as a cofactor.

Its subcellular location is the cytoplasm. It carries out the reaction N(6)-dimethylallyladenosine(37) in tRNA + (sulfur carrier)-SH + AH2 + 2 S-adenosyl-L-methionine = 2-methylsulfanyl-N(6)-dimethylallyladenosine(37) in tRNA + (sulfur carrier)-H + 5'-deoxyadenosine + L-methionine + A + S-adenosyl-L-homocysteine + 2 H(+). Catalyzes the methylthiolation of N6-(dimethylallyl)adenosine (i(6)A), leading to the formation of 2-methylthio-N6-(dimethylallyl)adenosine (ms(2)i(6)A) at position 37 in tRNAs that read codons beginning with uridine. This chain is tRNA-2-methylthio-N(6)-dimethylallyladenosine synthase, found in Anaplasma marginale (strain St. Maries).